The primary structure comprises 442 residues: uncharacterized protein (442 aa).

Helical transmembrane passes span 209–229 (FNIW…AYFY), 247–267 (IFFL…HTFS), 284–304 (VGIS…AFVC), 308–328 (LRFI…YTPW), 342–362 (IFFF…MFYI), 374–394 (PVFK…LHIP), and 402–422 (FDII…GVAF).

Its subcellular location is the membrane. This is an uncharacterized protein from Schizosaccharomyces pombe (strain 972 / ATCC 24843) (Fission yeast).